The following is a 379-amino-acid chain: Dual-specificity RNA methyltransferase RlmN (379 aa).

Glu-95 (proton acceptor) is an active-site residue. The Radical SAM core domain maps to 101 to 345 (EETRGTLCVS…TTVRKTRGDD (245 aa)). Cys-108 and Cys-350 form a disulfide bridge. Residues Cys-115, Cys-119, and Cys-122 each coordinate [4Fe-4S] cluster. S-adenosyl-L-methionine contacts are provided by residues 176–177 (GE), Ser-208, 230–232 (SLH), and Asn-307. Catalysis depends on Cys-350, which acts as the S-methylcysteine intermediate.

Belongs to the radical SAM superfamily. RlmN family. [4Fe-4S] cluster is required as a cofactor.

Its subcellular location is the cytoplasm. The catalysed reaction is adenosine(2503) in 23S rRNA + 2 reduced [2Fe-2S]-[ferredoxin] + 2 S-adenosyl-L-methionine = 2-methyladenosine(2503) in 23S rRNA + 5'-deoxyadenosine + L-methionine + 2 oxidized [2Fe-2S]-[ferredoxin] + S-adenosyl-L-homocysteine. It carries out the reaction adenosine(37) in tRNA + 2 reduced [2Fe-2S]-[ferredoxin] + 2 S-adenosyl-L-methionine = 2-methyladenosine(37) in tRNA + 5'-deoxyadenosine + L-methionine + 2 oxidized [2Fe-2S]-[ferredoxin] + S-adenosyl-L-homocysteine. Its function is as follows. Specifically methylates position 2 of adenine 2503 in 23S rRNA and position 2 of adenine 37 in tRNAs. m2A2503 modification seems to play a crucial role in the proofreading step occurring at the peptidyl transferase center and thus would serve to optimize ribosomal fidelity. The polypeptide is Dual-specificity RNA methyltransferase RlmN (Burkholderia ambifaria (strain MC40-6)).